The sequence spans 330 residues: CRISPR-associated endonuclease Cas1 (330 aa).

Residues Glu-154, His-222, and Glu-237 each contribute to the Mn(2+) site.

It belongs to the CRISPR-associated endonuclease Cas1 family. Homodimer, forms a heterotetramer with a Cas2 homodimer. Requires Mg(2+) as cofactor. Mn(2+) serves as cofactor.

Its function is as follows. CRISPR (clustered regularly interspaced short palindromic repeat), is an adaptive immune system that provides protection against mobile genetic elements (viruses, transposable elements and conjugative plasmids). CRISPR clusters contain spacers, sequences complementary to antecedent mobile elements, and target invading nucleic acids. CRISPR clusters are transcribed and processed into CRISPR RNA (crRNA). Acts as a dsDNA endonuclease. Involved in the integration of spacer DNA into the CRISPR cassette. This chain is CRISPR-associated endonuclease Cas1, found in Clostridium perfringens (strain SM101 / Type A).